Consider the following 80-residue polypeptide: UPF0291 protein LCA_1274 (80 aa).

Positions 59–80 (EGKEVTPEKVKDIQREKGLRDD) are disordered.

This sequence belongs to the UPF0291 family.

Its subcellular location is the cytoplasm. The chain is UPF0291 protein LCA_1274 from Latilactobacillus sakei subsp. sakei (strain 23K) (Lactobacillus sakei subsp. sakei).